A 391-amino-acid polypeptide reads, in one-letter code: MGTWCERCRRRDEQDYRNLDDCQKHFLLLMMGDFQHEIRGEQIVEQLTIPKEFVQRLKGDIPEEIQLETHNRNSYTVRVDKSQEKVIFAAGWAQFVKTFDLHMGDSMMFRFKGNSQFDVIIFDQVGREKVCSVAVDDYLDPNVQEGRTDATETLNSSRAHSQDDYLDPNVQEGRTNATETLNSSRAHSQPMPMQTPATETLNSSRAHSQDMPMQSPATETLNSSRAHPQPMPMQLPTETVNHFHAPHYPMQMPIENMALSRTQAMPTQMQSPPTYRWTQVQRDNLRYSLPSEDQGCRVGVIPDPIIGRRTKLNPVQEKVVNFKIQHIHSEIPIFVAVIKRSNVSGVLSTLSVAKRYVDEYLGGERFISLSRLGGKWGIRLLLVGVGVAQGW.

A DNA-binding region (TF-B3) is located at residues 32–125 (GDFQHEIRGE…QFDVIIFDQV (94 aa)). The segment at 143–232 (VQEGRTDATE…SSRAHPQPMP (90 aa)) is disordered. Polar residues predominate over residues 172 to 226 (EGRTNATETLNSSRAHSQPMPMQTPATETLNSSRAHSQDMPMQSPATETLNSSRA).

Its subcellular location is the nucleus. The polypeptide is Putative B3 domain-containing protein Os08g0325100 (Oryza sativa subsp. japonica (Rice)).